The primary structure comprises 602 residues: Elongation factor 4 (602 aa).

In terms of domain architecture, tr-type G spans 7 to 188; the sequence is ENIRNFSIIA…AIIELIPPPK (182 aa). Residues 19 to 24 and 135 to 138 contribute to the GTP site; these read DHGKST and NKID.

The protein belongs to the TRAFAC class translation factor GTPase superfamily. Classic translation factor GTPase family. LepA subfamily.

The protein localises to the cell inner membrane. The catalysed reaction is GTP + H2O = GDP + phosphate + H(+). In terms of biological role, required for accurate and efficient protein synthesis under certain stress conditions. May act as a fidelity factor of the translation reaction, by catalyzing a one-codon backward translocation of tRNAs on improperly translocated ribosomes. Back-translocation proceeds from a post-translocation (POST) complex to a pre-translocation (PRE) complex, thus giving elongation factor G a second chance to translocate the tRNAs correctly. Binds to ribosomes in a GTP-dependent manner. This Chlamydia caviae (strain ATCC VR-813 / DSM 19441 / 03DC25 / GPIC) (Chlamydophila caviae) protein is Elongation factor 4.